The sequence spans 332 residues: UPF0194 membrane protein YbhG (332 aa).

The first 16 residues, 1–16, serve as a signal peptide directing secretion; that stretch reads MMKKPVVIGLAVVVLA. Residues 108–209 adopt a coiled-coil conformation; that stretch reads EEIAQAAAAV…LNLQDSTLIA (102 aa).

It belongs to the UPF0194 family.

The protein resides in the periplasm. This chain is UPF0194 membrane protein YbhG, found in Escherichia coli O127:H6 (strain E2348/69 / EPEC).